We begin with the raw amino-acid sequence, 140 residues long: Transcription antitermination protein NusB (140 aa).

It belongs to the NusB family.

Involved in transcription antitermination. Required for transcription of ribosomal RNA (rRNA) genes. Binds specifically to the boxA antiterminator sequence of the ribosomal RNA (rrn) operons. This Thermoanaerobacter pseudethanolicus (strain ATCC 33223 / 39E) (Clostridium thermohydrosulfuricum) protein is Transcription antitermination protein NusB.